An 831-amino-acid chain; its full sequence is Heat shock 70 kDa protein 15 (831 aa).

Disordered stretches follow at residues 502–579 and 784–831; these read EEEV…KKKV and IMTK…EGST. Basic and acidic residues predominate over residues 512–526; the sequence is DQSEETAKMDTDKAS. 2 positions are modified to phosphoserine: Ser533 and Ser536. A compositionally biased stretch (low complexity) spans 787–800; the sequence is KPKPAAKAEAPQAK.

The protein belongs to the heat shock protein 70 (TC 1.A.33) family. HSP110/SSE subfamily.

It localises to the cytoplasm. The protein resides in the nucleus. In terms of biological role, in cooperation with other chaperones, Hsp70s are key components that facilitate folding of de novo synthesized proteins, assist translocation of precursor proteins into organelles, and are responsible for degradation of damaged protein under stress conditions. In Arabidopsis thaliana (Mouse-ear cress), this protein is Heat shock 70 kDa protein 15 (HSP70-15).